We begin with the raw amino-acid sequence, 1470 residues long: Transient receptor potential cation channel subfamily M member 2 (1470 aa).

The Cytoplasmic portion of the chain corresponds to 1 to 725 (MDEAALEPTL…GELSVDNPHW (725 aa)). Residues Tyr267, Arg274, 305–308 (GPGT), and Arg330 contribute to the ADP-D-ribose site. An intramembrane segment occupies 726–738 (KVLLCMIFFPLIY). Residues 739–808 (TGFLTFRRDE…MSFLKSPQVK (70 aa)) are Cytoplasmic-facing. A helical transmembrane segment spans residues 809–829 (FYWNIASYFGFLWLFAVVLMI). The Extracellular portion of the chain corresponds to 830–836 (DFQTSPS). A helical transmembrane segment spans residues 837–857 (WRELLLYVWLTSLVCEEIRQL). Positions 853 and 856 each coordinate Ca(2+). The Cytoplasmic segment spans residues 858–876 (YHDFDGSGFRRKAKMYIKD). The helical transmembrane segment at 877–897 (LWNILDVLSIVLFIAGLICRL) threads the bilayer. Asn879 is a Ca(2+) binding site. The Extracellular segment spans residues 898–905 (QASDTVFY). The chain crosses the membrane as a helical span at residues 906–926 (IGKVILCIDFIIFCLRLMAIF). Topologically, residues 927 to 941 (SISRTLGPKIIIVRR) are cytoplasmic. A helical transmembrane segment spans residues 942–968 (MMLDLFFFMFLLSIWVVAYGVAKQGIL). Topologically, residues 969–977 (IENEERLNW) are extracellular. Positions 978-1002 (IIRGAVYEPYITIFGNFPTNIDNTL) form an intramembrane region, pore-forming. The short motif at 991-993 (FGN) is the Selectivity filter element. At 1003–1034 (FDISSCSVNASDPLKPKCPMLNADNTPVFPEW) the chain is on the extracellular side. Cys1008 and Cys1020 are oxidised to a cystine. Asn1011 carries an N-linked (GlcNAc...) asparagine glycan. The chain crosses the membrane as a helical span at residues 1035-1059 (LTIMMLCVYLLFANILLLNLLIAIF). Residues 1060–1087 (NYTFQEVQDNTDTIWKFQRYELIKEYHS) lie on the Cytoplasmic side of the membrane. Glu1084 contacts Ca(2+). An intramembrane segment occupies 1088–1105 (RPALPPPFILLSHLILFI). Residues 1106 to 1470 (RGVFLRDLPQ…QIAHHHNTYF (365 aa)) lie on the Cytoplasmic side of the membrane. The divergent Nudix hydrolase-like domain stretch occupies residues 1157–1470 (HRIHDTAEKV…QIAHHHNTYF (314 aa)). 2 disordered regions span residues 1215–1256 (KSKV…LQYP) and 1281–1314 (PPVY…GKGA). Over residues 1231-1244 (DDGDSSGQETDDEE) the composition is skewed to acidic residues. Over residues 1283–1295 (VYNQQDSSESDTS) the composition is skewed to polar residues. The ADP-D-ribose site is built by Asp1398 and Arg1400.

It belongs to the transient receptor (TC 1.A.4) family. LTrpC subfamily. TRPM2 sub-subfamily. Homotetramer.

It localises to the cell membrane. The catalysed reaction is Ca(2+)(in) = Ca(2+)(out). It catalyses the reaction Na(+)(in) = Na(+)(out). With respect to regulation, activated by intracellular ADP-ribose. Ca(2+) and PI(4,5)P2 are required for channel opening by ADP-ribose. In terms of biological role, nonselective, voltage-independent cation channel that mediates Ca(2+) influx, leading to increased cytoplasmic Ca(2+) levels. Functions as a ligand-gated ion channel, gated by intracellular adenosine diphosphate ribose (ADP-ribose), Ca(2+), warm temperature, and oxidative stress. Binding of ADP-ribose to the cytoplasmic N-terminal region causes a conformation change; the channel is primed but still requires Ca(2+) binding to trigger channel opening. This chain is Transient receptor potential cation channel subfamily M member 2, found in Danio rerio (Zebrafish).